The primary structure comprises 337 residues: Nodulation protein D 2 (337 aa).

The region spanning 6 to 63 (LDLNLLVVLDSLMTARNLTAAARSINLSQPAMSAAVARLRAYFGDELFTMRGRTLVPT) is the HTH lysR-type domain. The H-T-H motif DNA-binding region spans 23 to 42 (LTAAARSINLSQPAMSAAVA).

The protein belongs to the LysR transcriptional regulatory family.

NodD regulates the expression of the nodABCFE genes which encode other nodulation proteins. NodD is also a negative regulator of its own expression. Binds flavonoids as inducers. The sequence is that of Nodulation protein D 2 (nodD2) from Bradyrhizobium sp. (strain NC92).